Consider the following 273-residue polypeptide: Phosphatidylglycerol--prolipoprotein diacylglyceryl transferase (273 aa).

Helical transmembrane passes span 21–41 (VSVR…LWLA), 60–80 (LLFA…VIFY), 95–115 (VWTG…AMFW), 124–144 (FFGV…MGRM), 176–196 (SQLY…NWFI), 203–223 (GAVS…VEFV), and 237–257 (ISMG…MMVW). Residue Arg-143 participates in a 1,2-diacyl-sn-glycero-3-phospho-(1'-sn-glycerol) binding.

The protein belongs to the Lgt family.

It localises to the cell inner membrane. It carries out the reaction L-cysteinyl-[prolipoprotein] + a 1,2-diacyl-sn-glycero-3-phospho-(1'-sn-glycerol) = an S-1,2-diacyl-sn-glyceryl-L-cysteinyl-[prolipoprotein] + sn-glycerol 1-phosphate + H(+). The protein operates within protein modification; lipoprotein biosynthesis (diacylglyceryl transfer). Catalyzes the transfer of the diacylglyceryl group from phosphatidylglycerol to the sulfhydryl group of the N-terminal cysteine of a prolipoprotein, the first step in the formation of mature lipoproteins. In Vibrio campbellii (strain ATCC BAA-1116), this protein is Phosphatidylglycerol--prolipoprotein diacylglyceryl transferase.